The sequence spans 228 residues: Putative N-acetylmannosamine-6-phosphate 2-epimerase (228 aa).

Belongs to the NanE family.

It catalyses the reaction an N-acyl-D-glucosamine 6-phosphate = an N-acyl-D-mannosamine 6-phosphate. It participates in amino-sugar metabolism; N-acetylneuraminate degradation; D-fructose 6-phosphate from N-acetylneuraminate: step 3/5. Functionally, converts N-acetylmannosamine-6-phosphate (ManNAc-6-P) to N-acetylglucosamine-6-phosphate (GlcNAc-6-P). In Thermosynechococcus vestitus (strain NIES-2133 / IAM M-273 / BP-1), this protein is Putative N-acetylmannosamine-6-phosphate 2-epimerase.